Reading from the N-terminus, the 321-residue chain is Peptide transport system permease protein SapB (321 aa).

Residues methionine 1 to arginine 8 lie on the Cytoplasmic side of the membrane. The chain crosses the membrane as a helical span at residues leucine 9–phenylalanine 29. Over threonine 30 to leucine 80 the chain is Periplasmic. The region spanning phenylalanine 74–serine 302 is the ABC transmembrane type-1 domain. Residues cysteine 81 to valine 101 traverse the membrane as a helical segment. Topologically, residues threonine 102 to alanine 113 are cytoplasmic. Residues leucine 114–phenylalanine 134 traverse the membrane as a helical segment. At serine 135–glutamate 174 the chain is on the periplasmic side. A helical membrane pass occupies residues methionine 175–threonine 195. Topologically, residues threonine 196 to glutamine 248 are cytoplasmic. The helical transmembrane segment at phenylalanine 249–glycine 269 threads the bilayer. Over arginine 270–aspartate 280 the chain is Periplasmic. Residues tyrosine 281 to isoleucine 301 form a helical membrane-spanning segment. Residues serine 302–arginine 321 are Cytoplasmic-facing.

This sequence belongs to the binding-protein-dependent transport system permease family. OppBC subfamily.

Its subcellular location is the cell inner membrane. Functionally, involved in a peptide intake transport system that plays a role in the resistance to antimicrobial peptides. This is Peptide transport system permease protein SapB from Salmonella typhimurium (strain LT2 / SGSC1412 / ATCC 700720).